The sequence spans 307 residues: Transcription initiation factor IIF subunit beta (307 aa).

Over residues 1–12 (MSEEKPTVRTEE) the composition is skewed to basic and acidic residues. Disordered regions lie at residues 1–22 (MSEE…DAGD) and 261–307 (VELR…IDVV). Residues 13–22 (DDRYEDDAGD) are compositionally biased toward acidic residues. Over residues 263–290 (LRNQQASQSESSSIDHTGKNTSPDNPGT) the composition is skewed to polar residues. Over residues 292–307 (AEEDEDDDGVEMIDVV) the composition is skewed to acidic residues.

This sequence belongs to the TFIIF beta subunit family. In terms of assembly, component of the fcp1/TFIIF/polII complex via interaction of tfg3 with both tfg1/TFIIF-alpha and tfg2/TFIIF-beta subunits.

The protein resides in the nucleus. In terms of biological role, TFIIF is a general transcription initiation factor that binds to RNA polymerase II and helps to recruit it to the initiation complex in collaboration with TFIIB. It promotes transcription elongation. This Schizosaccharomyces pombe (strain 972 / ATCC 24843) (Fission yeast) protein is Transcription initiation factor IIF subunit beta (tfg2).